Here is a 208-residue protein sequence, read N- to C-terminus: Uracil phosphoribosyltransferase (208 aa).

Residues arginine 78, arginine 103, and 130–138 (DPMLATGGS) contribute to the 5-phospho-alpha-D-ribose 1-diphosphate site. Residues isoleucine 193 and 198-200 (GDA) each bind uracil. Aspartate 199 contributes to the 5-phospho-alpha-D-ribose 1-diphosphate binding site.

It belongs to the UPRTase family. Requires Mg(2+) as cofactor.

The catalysed reaction is UMP + diphosphate = 5-phospho-alpha-D-ribose 1-diphosphate + uracil. The protein operates within pyrimidine metabolism; UMP biosynthesis via salvage pathway; UMP from uracil: step 1/1. With respect to regulation, allosterically activated by GTP. In terms of biological role, catalyzes the conversion of uracil and 5-phospho-alpha-D-ribose 1-diphosphate (PRPP) to UMP and diphosphate. The protein is Uracil phosphoribosyltransferase of Aliivibrio fischeri (strain MJ11) (Vibrio fischeri).